The chain runs to 436 residues: 3-ketoacyl-CoA thiolase (436 aa).

Cys-99 serves as the catalytic Acyl-thioester intermediate. Catalysis depends on proton acceptor residues His-392 and Cys-422.

Belongs to the thiolase-like superfamily. Thiolase family. In terms of assembly, heterotetramer of two alpha chains (FadJ) and two beta chains (FadI).

The protein localises to the cytoplasm. It catalyses the reaction an acyl-CoA + acetyl-CoA = a 3-oxoacyl-CoA + CoA. Its pathway is lipid metabolism; fatty acid beta-oxidation. In terms of biological role, catalyzes the final step of fatty acid oxidation in which acetyl-CoA is released and the CoA ester of a fatty acid two carbons shorter is formed. In Salmonella typhi, this protein is 3-ketoacyl-CoA thiolase.